A 145-amino-acid polypeptide reads, in one-letter code: I-leader protein (145 aa).

It belongs to the adenoviridae leader protein family.

It localises to the host cytoplasm. It is found in the host perinuclear region. The chain is I-leader protein from Human adenovirus C serotype 5 (HAdV-5).